The primary structure comprises 156 residues: Putative pre-16S rRNA nuclease (156 aa).

It belongs to the YqgF nuclease family.

It is found in the cytoplasm. Its function is as follows. Could be a nuclease involved in processing of the 5'-end of pre-16S rRNA. The sequence is that of Putative pre-16S rRNA nuclease from Bartonella tribocorum (strain CIP 105476 / IBS 506).